Here is a 775-residue protein sequence, read N- to C-terminus: Thiamine repressible genes regulatory protein thi1 (775 aa).

A DNA-binding region (zn(2)-C6 fungal-type) is located at residues 39–65 (CKHCRQKKIKCNGGQPCISCKTLNIEC). Position 208 is a phosphoserine (S208). 2 disordered regions span residues 676 to 695 (LTGESSNGSNSTPNEAFQPF) and 754 to 775 (NVSEQSSHTAEQTSNLTLEKNG).

It is found in the nucleus. Its function is as follows. Transcription factor that activates the nmt1 promoter. Regulation of thiamine repressible genes. Positively regulates conjugation during meiosis. This Schizosaccharomyces pombe (strain 972 / ATCC 24843) (Fission yeast) protein is Thiamine repressible genes regulatory protein thi1 (thi1).